A 56-amino-acid polypeptide reads, in one-letter code: 4Fe-4S ferredoxin FdxA (56 aa).

4Fe-4S ferredoxin-type domains lie at 1-28 (MAYVINEACISCGACEPECPVNAISSGD) and 29-56 (DRYVIDADTCIDCGACAGVCPVDAPVQA). [4Fe-4S] cluster-binding residues include cysteine 9, cysteine 12, cysteine 15, cysteine 19, cysteine 38, cysteine 41, cysteine 44, and cysteine 48.

[4Fe-4S] cluster serves as cofactor.

Its function is as follows. Ferredoxins are iron-sulfur proteins that transfer electrons in a wide variety of metabolic reactions. This Gottschalkia acidurici (strain ATCC 7906 / DSM 604 / BCRC 14475 / CIP 104303 / KCTC 5404 / NCIMB 10678 / 9a) (Clostridium acidurici) protein is 4Fe-4S ferredoxin FdxA.